We begin with the raw amino-acid sequence, 442 residues long: Elongation factor 1-alpha 1 (442 aa).

One can recognise a tr-type G domain in the interval 5–227 (KEHLNLVVIG…AALDSFKIPK (223 aa)). Residues 14–21 (GHVDSGKS) form a G1 region. Position 14-21 (14-21 (GHVDSGKS)) interacts with GTP. The G2 stretch occupies residues 70-74 (GITID). The segment at 91-94 (DAPG) is G3. Residues 91-95 (DAPGH) and 153-156 (NKMD) contribute to the GTP site. Positions 153–156 (NKMD) are G4. Positions 194-196 (SGF) are G5.

The protein belongs to the TRAFAC class translation factor GTPase superfamily. Classic translation factor GTPase family. EF-Tu/EF-1A subfamily.

It localises to the cytoplasm. Functionally, this protein promotes the GTP-dependent binding of aminoacyl-tRNA to the A-site of ribosomes during protein biosynthesis. The polypeptide is Elongation factor 1-alpha 1 (EFA1) (Euplotes crassus).